The chain runs to 436 residues: Chromosomal replication initiator protein DnaA (436 aa).

Residues Met-1–Ile-69 form a domain I, interacts with DnaA modulators region. The segment at Ile-69–Ser-99 is domain II. The interval Leu-100–Ala-314 is domain III, AAA+ region. ATP-binding residues include Gly-144, Gly-146, Lys-147, and Thr-148. A domain IV, binds dsDNA region spans residues Asn-315–Glu-436.

Belongs to the DnaA family. In terms of assembly, oligomerizes as a right-handed, spiral filament on DNA at oriC.

The protein localises to the cytoplasm. Its function is as follows. Plays an essential role in the initiation and regulation of chromosomal replication. ATP-DnaA binds to the origin of replication (oriC) to initiate formation of the DNA replication initiation complex once per cell cycle. Binds the DnaA box (a 9 base pair repeat at the origin) and separates the double-stranded (ds)DNA. Forms a right-handed helical filament on oriC DNA; dsDNA binds to the exterior of the filament while single-stranded (ss)DNA is stabiized in the filament's interior. The ATP-DnaA-oriC complex binds and stabilizes one strand of the AT-rich DNA unwinding element (DUE), permitting loading of DNA polymerase. After initiation quickly degrades to an ADP-DnaA complex that is not apt for DNA replication. Binds acidic phospholipids. The protein is Chromosomal replication initiator protein DnaA of Campylobacter fetus subsp. fetus (strain 82-40).